A 260-amino-acid polypeptide reads, in one-letter code: Hydroxyethylthiazole kinase 2 (260 aa).

Methionine 40 provides a ligand contact to substrate. ATP is bound by residues arginine 116 and threonine 161. Alanine 188 is a binding site for substrate.

The protein belongs to the Thz kinase family. Mg(2+) is required as a cofactor.

The enzyme catalyses 5-(2-hydroxyethyl)-4-methylthiazole + ATP = 4-methyl-5-(2-phosphooxyethyl)-thiazole + ADP + H(+). It functions in the pathway cofactor biosynthesis; thiamine diphosphate biosynthesis; 4-methyl-5-(2-phosphoethyl)-thiazole from 5-(2-hydroxyethyl)-4-methylthiazole: step 1/1. Catalyzes the phosphorylation of the hydroxyl group of 4-methyl-5-beta-hydroxyethylthiazole (THZ). This Oceanobacillus iheyensis (strain DSM 14371 / CIP 107618 / JCM 11309 / KCTC 3954 / HTE831) protein is Hydroxyethylthiazole kinase 2.